Here is a 1039-residue protein sequence, read N- to C-terminus: uncharacterized protein (1039 aa).

Basic residues predominate over residues 1–19; sequence MSLLMAHRKSKSSQRKLRN. The segment at 1–38 is disordered; that stretch reads MSLLMAHRKSKSSQRKLRNRSSSLTPQKRRIRASKGSH.

This is an uncharacterized protein from Sinorhizobium fredii (strain NBRC 101917 / NGR234).